The following is a 474-amino-acid chain: Pyoverdine export outer membrane protein OpmQ (474 aa).

The first 17 residues, 1 to 17, serve as a signal peptide directing secretion; sequence MSMKNLSLISACLLLGA. Cysteine 18 is lipidated: N-palmitoyl cysteine. Cysteine 18 carries the S-diacylglycerol cysteine lipid modification.

This sequence belongs to the outer membrane factor (OMF) (TC 1.B.17) family. In terms of assembly, part of the tripartite efflux system PvdRT-OpmQ, which is composed of an inner membrane component with both ATPase and permease domains, PvdT, a periplasmic membrane fusion protein, PvdR, and an outer membrane component, OpmQ.

The protein resides in the cell outer membrane. Its function is as follows. Part of the tripartite efflux system PvdRT-OpmQ required for the secretion into the extracellular milieu of the siderophore pyoverdine (PVD), which is involved in iron acquisition. The system is responsible for export of newly synthesized PVD after the final steps of biosynthesis have taken place in the periplasm. It is also responsible for recycling of PVD after internalization of ferri-PVD into the periplasm by the outer-membrane receptor FpvA and release of iron from PVD, thus making PVD available for new cycles of iron uptake. In addition, can expel unwanted metals complexed with PVD from the periplasm into the extracellular medium. This chain is Pyoverdine export outer membrane protein OpmQ, found in Pseudomonas aeruginosa (strain ATCC 15692 / DSM 22644 / CIP 104116 / JCM 14847 / LMG 12228 / 1C / PRS 101 / PAO1).